The sequence spans 505 residues: Glutamyl-tRNA(Gln) amidotransferase subunit A, mitochondrial (505 aa).

Catalysis depends on charge relay system residues Lys-76 and Ser-158. The active-site Acyl-ester intermediate is the Ser-182.

Belongs to the amidase family. GatA subfamily. Subunit of the heterotrimeric GatCAB amidotransferase (AdT) complex, composed of A, B and C subunits.

The protein localises to the mitochondrion. The enzyme catalyses L-glutamyl-tRNA(Gln) + L-glutamine + ATP + H2O = L-glutaminyl-tRNA(Gln) + L-glutamate + ADP + phosphate + H(+). Its function is as follows. Allows the formation of correctly charged Gln-tRNA(Gln) through the transamidation of misacylated Glu-tRNA(Gln) in the mitochondria. The reaction takes place in the presence of glutamine and ATP through an activated gamma-phospho-Glu-tRNA(Gln). The protein is Glutamyl-tRNA(Gln) amidotransferase subunit A, mitochondrial of Ixodes scapularis (Black-legged tick).